The chain runs to 607 residues: MNSVSAAERLKSFGDAGPVCNKSIIFPSRVVTLANSFEKKDRSWYVKSQIPTDLSIQVNDITFKAHKFPLISKCGYISSIELKPSTSENGYHLKLENFPGGADTFETILKFCYNLPLDLNPLNVAPLRCASEYLYMTEEFEAGNLISKTEAFITFVVLASWRDTLTVLRSCTNLSPWAENLQIVRRCCDLLAWKACNDNNIPEDVVDRNERCLYNDIATLDIDHFMRVITTMKARRAKPQITGKIIMKYADNFLPVINDDLEGIKGYGLGKNELQFSVNRGRMEESNSLGCQEHKETIESLVSVLPPQSGAVSCHFLLRMLKTSIVYSASPALISDLEKRVGMALEDANVCDLLIPNFKNEEQQERVRIFEFFLMHEQQQVLGKPSISKLLDNYLAEIAKDPYLPITKFQVLAEMLPENAWKCHDGLYRAIDMFLKTHPSLSDHDRRRLCKTMNCEKLSLDACLHAAQNDRLPLRTIVQINTQVLFSEQVKMRMMMQDKLPEKEEENSGGREDKRMSRDNEIIKTLKEELENVKKKMSELQSDYNELQQEYERLSSKQKSSHNWGLRWQKVKKSFQTKREDEETRERTRRRSSTGQRTSFRRRMSMS.

Positions 52-121 (TDLSIQVNDI…CYNLPLDLNP (70 aa)) constitute a BTB domain. The region spanning 211–487 (RCLYNDIATL…VQINTQVLFS (277 aa)) is the NPH3 domain. At Y428 the chain carries Phosphotyrosine. 2 disordered regions span residues 498–520 (DKLP…SRDN) and 573–607 (KSFQ…MSMS). Composition is skewed to basic and acidic residues over residues 499-520 (KLPE…SRDN) and 577-586 (TKREDEETRE). Positions 511-563 (REDKRMSRDNEIIKTLKEELENVKKKMSELQSDYNELQQEYERLSSKQKSSHN) form a coiled coil.

The protein belongs to the NPH3 family. As to expression, expressed in emerging leaf primordia.

It functions in the pathway protein modification; protein ubiquitination. Functionally, may act as a substrate-specific adapter of an E3 ubiquitin-protein ligase complex (CUL3-RBX1-BTB) which mediates the ubiquitination and subsequent proteasomal degradation of target proteins. Involved in leaf vasculature patterning. This chain is BTB/POZ domain-containing protein DOT3, found in Arabidopsis thaliana (Mouse-ear cress).